The sequence spans 594 residues: Actin-histidine N-methyltransferase (594 aa).

The segment at 1–22 is disordered; that stretch reads MGKKSRVKTQKSGTGATATVSP. Positions 10–20 are enriched in polar residues; the sequence is QKSGTGATATV. S-adenosyl-L-methionine-binding positions include arginine 75, 104 to 106, arginine 254, 275 to 279, and 325 to 327; these read EGF, DMCNH, and SGF. In terms of domain architecture, SET spans 94 to 314; that stretch reads EGFEMVNFKE…AGEQIYIFYG (221 aa). Serine 513 is modified (phosphoserine). The tract at residues 549 to 594 is disordered; sequence ENGLVNGENSIPNGTRSENESLNQESKRAVEDAKGSSSDSTAGVKE. The span at 555–572 shows a compositional bias: polar residues; the sequence is GENSIPNGTRSENESLNQ. Residues 573 to 582 are compositionally biased toward basic and acidic residues; that stretch reads ESKRAVEDAK. Residues 583-594 are compositionally biased toward polar residues; it reads GSSSDSTAGVKE.

It belongs to the class V-like SAM-binding methyltransferase superfamily. SETD3 actin-histidine methyltransferase family. As to quaternary structure, interacts with MYOD1. Phosphorylated by GSK3B, which is required for recognition by the SCF(FBXW7) complex and subsequent degradation. Post-translationally, ubiquitinated by the SCF(FBXW7) complex following phosphorylation by GSK3B, leading to its degradation by the proteasome.

It is found in the cytoplasm. Its subcellular location is the nucleus. The catalysed reaction is L-histidyl-[protein] + S-adenosyl-L-methionine = N(tele)-methyl-L-histidyl-[protein] + S-adenosyl-L-homocysteine + H(+). In terms of biological role, protein-histidine N-methyltransferase that specifically mediates 3-methylhistidine (tele-methylhistidine) methylation of actin at 'His-73'. Histidine methylation of actin is required for smooth muscle contraction of the laboring uterus during delivery. Does not have protein-lysine N-methyltransferase activity and probably only catalyzes histidine methylation of actin. This chain is Actin-histidine N-methyltransferase, found in Homo sapiens (Human).